A 542-amino-acid polypeptide reads, in one-letter code: Endonuclease 4 homolog (542 aa).

2 disordered regions span residues 89 to 123 and 141 to 234; these read NEEI…QTSI and PFFS…ENKF. 2 stretches are compositionally biased toward low complexity: residues 99-115 and 147-170; these read SKKL…QQSK and NNAS…TTTT. Positions 171-206 form a coiled coil; that stretch reads TKKRNNKDEENEDDNEEEEEEEEEEEDKKSKKKTTT. The segment covering 179-196 has biased composition (acidic residues); that stretch reads EENEDDNEEEEEEEEEEE. Positions 205–215 are enriched in low complexity; sequence TTTTTTTTTTA. A compositionally biased stretch (basic residues) spans 216–227; sequence YKKKSSPKKKKV. The Nuclear localization signal motif lies at 222–227; that stretch reads PKKKKV. Residues histidine 328, histidine 368, glutamate 404, aspartate 438, histidine 441, histidine 475, aspartate 488, histidine 490, and glutamate 520 each contribute to the Zn(2+) site.

It belongs to the AP endonuclease 2 family. Zn(2+) serves as cofactor.

The protein resides in the nucleus. The enzyme catalyses Endonucleolytic cleavage to 5'-phosphooligonucleotide end-products.. Its function is as follows. Plays a role in DNA repair. It cleaves phosphodiester bonds at apurinic or apyrimidinic sites (AP sites) to produce new 5'-ends that are base-free deoxyribose 5-phosphate residues. In Dictyostelium discoideum (Social amoeba), this protein is Endonuclease 4 homolog (apnA).